The chain runs to 383 residues: Proton extrusion protein PxcA (383 aa).

4 consecutive transmembrane segments (helical) span residues 163-183 (ILLL…AYII), 258-278 (AVKN…VCFA), 306-326 (IILF…TVLL), and 341-361 (FVML…KYWI).

Belongs to the CemA family.

It is found in the cell inner membrane. Its function is as follows. Required for H(+) efflux immediately after light irradiation to form a rapid H(+) concentration gradient across the thylakoid membranes. Together with PxcL, contributes to transient H(+) uptake following dark to light transition. The chain is Proton extrusion protein PxcA from Synechococcus sp. (strain CC9902).